Here is a 124-residue protein sequence, read N- to C-terminus: Small ribosomal subunit protein uS12 (124 aa).

Position 89 is a 3-methylthioaspartic acid (Asp-89).

The protein belongs to the universal ribosomal protein uS12 family. As to quaternary structure, part of the 30S ribosomal subunit. Contacts proteins S8 and S17. May interact with IF1 in the 30S initiation complex.

Functionally, with S4 and S5 plays an important role in translational accuracy. In terms of biological role, interacts with and stabilizes bases of the 16S rRNA that are involved in tRNA selection in the A site and with the mRNA backbone. Located at the interface of the 30S and 50S subunits, it traverses the body of the 30S subunit contacting proteins on the other side and probably holding the rRNA structure together. The combined cluster of proteins S8, S12 and S17 appears to hold together the shoulder and platform of the 30S subunit. The chain is Small ribosomal subunit protein uS12 from Aeromonas hydrophila subsp. hydrophila (strain ATCC 7966 / DSM 30187 / BCRC 13018 / CCUG 14551 / JCM 1027 / KCTC 2358 / NCIMB 9240 / NCTC 8049).